The chain runs to 268 residues: ClpXP adapter protein SpxH (268 aa).

Belongs to the SpxH family. Interacts with Spx.

Its subcellular location is the cytoplasm. Adapter protein required for efficient degradation of Spx by ClpXP under non-stress conditions. Interaction with Spx stabilizes Spx and exposes the C-terminus of Spx for recognition and proteolysis by ClpXP. In Staphylococcus aureus (strain COL), this protein is ClpXP adapter protein SpxH.